The primary structure comprises 1019 residues: Serine/threonine-protein kinase 31 (1019 aa).

A Tudor domain is found at 78-137; the sequence is NLDPNKIYGGLFSEDQCWYRCKVLKIISVEKCLVRYIDYGNTEILNRSDIVEIPLELQFS. Residues 298–355 adopt a coiled-coil conformation; sequence EKIKQDQKLIEENEKLKTEKDALLESYKALELKVEQIAQELQQEKAAAVDLTNHLEYT. The 310-residue stretch at 710-1019 folds into the Protein kinase domain; that stretch reads IGLLKYMNSG…TRNGEANFDC (310 aa). Residues 716–724 and lysine 737 contribute to the ATP site; that span reads MNSGGLLTM.

This sequence belongs to the protein kinase superfamily. Ser/Thr protein kinase family. As to expression, testis specific.

The enzyme catalyses L-seryl-[protein] + ATP = O-phospho-L-seryl-[protein] + ADP + H(+). It catalyses the reaction L-threonyl-[protein] + ATP = O-phospho-L-threonyl-[protein] + ADP + H(+). The polypeptide is Serine/threonine-protein kinase 31 (STK31) (Homo sapiens (Human)).